A 415-amino-acid chain; its full sequence is Probable N-acetyl-gamma-glutamyl-phosphate reductase, chloroplastic (415 aa).

The transit peptide at 1–74 (MGSTALGGGA…SGVKSGEEVR (74 aa)) directs the protein to the chloroplast. A disordered region spans residues 48–68 (VRASVASSPQKQHSPKTSGVK). Positions 56–67 (PQKQHSPKTSGV) are enriched in polar residues. Cys219 is an active-site residue.

The protein belongs to the NAGSA dehydrogenase family. Type 1 subfamily. Homotetramer.

Its subcellular location is the plastid. The protein resides in the chloroplast. It catalyses the reaction N-acetyl-L-glutamate 5-semialdehyde + phosphate + NADP(+) = N-acetyl-L-glutamyl 5-phosphate + NADPH + H(+). Its pathway is amino-acid biosynthesis; L-arginine biosynthesis; N(2)-acetyl-L-ornithine from L-glutamate: step 3/4. This Oryza sativa subsp. japonica (Rice) protein is Probable N-acetyl-gamma-glutamyl-phosphate reductase, chloroplastic.